We begin with the raw amino-acid sequence, 229 residues long: tRNA (guanine-N(7)-)-methyltransferase (229 aa).

4 residues coordinate S-adenosyl-L-methionine: Glu-59, Glu-84, Asp-111, and Asp-134. Asp-134 is an active-site residue. Residues Lys-138, Asp-170, and 205–208 (TKFE) each bind substrate.

The protein belongs to the class I-like SAM-binding methyltransferase superfamily. TrmB family.

It carries out the reaction guanosine(46) in tRNA + S-adenosyl-L-methionine = N(7)-methylguanosine(46) in tRNA + S-adenosyl-L-homocysteine. The protein operates within tRNA modification; N(7)-methylguanine-tRNA biosynthesis. In terms of biological role, catalyzes the formation of N(7)-methylguanine at position 46 (m7G46) in tRNA. The chain is tRNA (guanine-N(7)-)-methyltransferase from Nitrosospira multiformis (strain ATCC 25196 / NCIMB 11849 / C 71).